A 390-amino-acid chain; its full sequence is Galactokinase (390 aa).

34–37 (EHTD) contacts substrate. ATP is bound by residues Ser68 and 122 to 128 (GSGLSSS). 2 residues coordinate Mg(2+): Ser128 and Glu160. The Proton acceptor role is filled by Asp172. A substrate-binding site is contributed by Tyr221.

Belongs to the GHMP kinase family. GalK subfamily.

It is found in the cytoplasm. It carries out the reaction alpha-D-galactose + ATP = alpha-D-galactose 1-phosphate + ADP + H(+). The protein operates within carbohydrate metabolism; galactose metabolism. In terms of biological role, catalyzes the transfer of the gamma-phosphate of ATP to D-galactose to form alpha-D-galactose-1-phosphate (Gal-1-P). This chain is Galactokinase, found in Chloroflexus aurantiacus (strain ATCC 29366 / DSM 635 / J-10-fl).